The chain runs to 246 residues: 3'(2'),5'-bisphosphate nucleotidase CysQ (246 aa).

Mg(2+) is bound by residues Glu64, Asp83, Leu85, Asp86, and Asp205. Residue Glu64 participates in substrate binding. Residues 85 to 88 (LDGT) and Asp205 each bind substrate.

It belongs to the inositol monophosphatase superfamily. CysQ family. Mg(2+) serves as cofactor.

It localises to the cell inner membrane. The catalysed reaction is adenosine 3',5'-bisphosphate + H2O = AMP + phosphate. Its function is as follows. Converts adenosine-3',5'-bisphosphate (PAP) to AMP. The protein is 3'(2'),5'-bisphosphate nucleotidase CysQ of Shigella flexneri.